We begin with the raw amino-acid sequence, 539 residues long: Sodium/hydrogen exchanger 9B2 (539 aa).

Residues 1 to 94 are Cytoplasmic-facing; sequence MEDSLFSVDK…ACPPQGCFSL (94 aa). Residues 95-112 form a helical membrane-spanning segment; sequence AITNVTMVILIWAVVWSI. Residues 113-121 are Extracellular-facing; the sequence is TGPECLPGG. Residues 122 to 141 form a helical membrane-spanning segment; sequence NLFGILALLFSAALGGKLIS. Residues 142 to 152 lie on the Cytoplasmic side of the membrane; it reads LIKIPSLPPLP. The chain crosses the membrane as a helical span at residues 153–169; sequence PLLGMLLAGFLIRNIPV. Residues 170 to 179 are Extracellular-facing; it reads ITDQVQIHHK. A helical membrane pass occupies residues 180–197; the sequence is WSAALRNIALAIILVRAG. Over 198–208 the chain is Cytoplasmic; sequence LGLDPKALRKL. A helical transmembrane segment spans residues 209 to 235; it reads KAVCLRLSFGPCVVESCTAAVVSHFIM. Residues 236–241 are Extracellular-facing; sequence GFPLTW. Residues 242-250 traverse the membrane as a helical segment; sequence GFMLGFVLG. Residues 251–278 are Cytoplasmic-facing; the sequence is AVSPAVVVPSMLILQKEGFGVDKGIPTL. 4 residues coordinate Na(+): Val-252, Gly-283, Asp-286, and Asp-287. A helical transmembrane segment spans residues 279 to 298; sequence LMAAGSFDDVLAITGFNTCL. Residues 299–308 are Extracellular-facing; it reads GMAFSSGSTL. Residues 309–332 traverse the membrane as a helical segment; that stretch reads NTIVRGVLEVVVGIAAGLLFGFFL. Residues 333 to 347 are Cytoplasmic-facing; that stretch reads HYFPSKDQENLKGKR. The chain crosses the membrane as a helical span at residues 348–365; sequence SYLILALSVFAVFGSLYF. Residues 366-369 lie on the Extracellular side of the membrane; it reads GFPG. A helical membrane pass occupies residues 370–381; sequence SGGLCTLVMAFL. Over 382 to 398 the chain is Cytoplasmic; it reads AGIGWSTDKTVVEDIIA. The helical transmembrane segment at 399-419 threads the bilayer; that stretch reads VSWDIFQPLLFGLIGAEISVA. The Extracellular segment spans residues 420–425; sequence SLKPET. The chain crosses the membrane as a helical span at residues 426–448; it reads VGLCTATLIIALIIRICISFLMV. Residues 449–469 lie on the Cytoplasmic side of the membrane; the sequence is CFSGFSLKEKIFISLAWMPKA. The helical transmembrane segment at 470–481 threads the bilayer; it reads TVQAAIGSVALD. Residues 482–494 are Extracellular-facing; that stretch reads TARTLENKQFEDY. The helical transmembrane segment at 495-517 threads the bilayer; the sequence is GMDVLTVAFLGILVTAPIGALVI. The Cytoplasmic segment spans residues 518 to 539; it reads GLTGPKMLEKSESRTVTEEGSV.

Belongs to the monovalent cation:proton antiporter 1 (CPA1) transporter (TC 2.A.36) family. In terms of assembly, homodimer; dimerization is essential for SLC9B2 activity. Lipids seem to play a role in the stabilization of the dimerization subdomain.

It localises to the cell membrane. The protein localises to the mitochondrion membrane. Its subcellular location is the endosome membrane. The protein resides in the recycling endosome membrane. It is found in the cytoplasmic vesicle. It localises to the secretory vesicle. The protein localises to the synaptic vesicle membrane. Its subcellular location is the basolateral cell membrane. The protein resides in the apical cell membrane. The enzyme catalyses Li(+)(out) + H(+)(in) = Li(+)(in) + H(+)(out). It catalyses the reaction Li(+)(in) + Na(+)(out) = Li(+)(out) + Na(+)(in). It carries out the reaction Na(+)(in) + H(+)(out) = Na(+)(out) + H(+)(in). With respect to regulation, allosterically inhibited by the N-terminal domain. Inhibited by phloretin. In terms of biological role, electroneutral Na(+) Li(+)/H(+) antiporter that extrudes Na(+) or Li(+) in exchange for external protons across the membrane. Uses the proton gradient/membrane potential to extrude sodium. Contributes to the regulation of intracellular pH and sodium homeostasis. Also able to mediate Na(+)/Li(+) antiporter activity in kidney. This is Sodium/hydrogen exchanger 9B2 (slc9b2) from Xenopus tropicalis (Western clawed frog).